The primary structure comprises 383 residues: uncharacterized protein (383 aa).

It to V.anguillarum virulence protein VirA.

Its function is as follows. Could have an enzymatic function. This is an uncharacterized protein from Sinorhizobium fredii (strain NBRC 101917 / NGR234).